We begin with the raw amino-acid sequence, 269 residues long: Ribonuclease HII (269 aa).

The region spanning 61 to 250 is the RNase H type-2 domain; sequence RLVCGVDEAG…VRKMLSPGLE (190 aa). Residues D67, E68, and D158 each coordinate a divalent metal cation.

Belongs to the RNase HII family. Mn(2+) serves as cofactor. Requires Mg(2+) as cofactor.

It is found in the cytoplasm. The catalysed reaction is Endonucleolytic cleavage to 5'-phosphomonoester.. In terms of biological role, endonuclease that specifically degrades the RNA of RNA-DNA hybrids. The polypeptide is Ribonuclease HII (Parvibaculum lavamentivorans (strain DS-1 / DSM 13023 / NCIMB 13966)).